A 181-amino-acid chain; its full sequence is Adenylyl-sulfate kinase (181 aa).

20–27 (GLSGAGKS) provides a ligand contact to ATP. The active-site Phosphoserine intermediate is the Ser-94.

This sequence belongs to the APS kinase family.

The enzyme catalyses adenosine 5'-phosphosulfate + ATP = 3'-phosphoadenylyl sulfate + ADP + H(+). Its pathway is sulfur metabolism; hydrogen sulfide biosynthesis; sulfite from sulfate: step 2/3. Functionally, catalyzes the synthesis of activated sulfate. This Deinococcus deserti (strain DSM 17065 / CIP 109153 / LMG 22923 / VCD115) protein is Adenylyl-sulfate kinase.